We begin with the raw amino-acid sequence, 190 residues long: UPF0301 protein PSPTO_5037 (190 aa).

This sequence belongs to the UPF0301 (AlgH) family.

The protein is UPF0301 protein PSPTO_5037 of Pseudomonas syringae pv. tomato (strain ATCC BAA-871 / DC3000).